A 351-amino-acid chain; its full sequence is MNGTEGPYFYVPMVNTTGVVRSPYEYPQYYLVNPAAFAVLGAYMFFLIIFGFPINFLTLYVTLEHKKLRTPLNYILLNLAVADLFMVIGGFTTTMYSSMHGYFVLGRLGCNLEGFSATLGGMISLWSLAVLAIERWVVVCKPTSNFRFGENHAIMGVSLTWTMALACTVPPLVGWSRYIPEGMQCSCGIDYYTRAEGFNNESFVLYMFFCHFMVPLIIIFFCYGRLLCAVKEAAAAQQESETTQRAEREVTRMVILMVIGYLVCWLPYASVAWFIFTHQGSEFGPLFMTIPAFFAKSSSIYNPVIYICMNKQFRNCMITTLFCGKNPFEGEEEGASSTKTEASSASSVSPA.

Topologically, residues 1 to 36 (MNGTEGPYFYVPMVNTTGVVRSPYEYPQYYLVNPAA) are extracellular. N-linked (GlcNAc...) asparagine glycans are attached at residues asparagine 2 and asparagine 15. A helical membrane pass occupies residues 37-61 (FAVLGAYMFFLIIFGFPINFLTLYV). The Cytoplasmic portion of the chain corresponds to 62 to 73 (TLEHKKLRTPLN). The helical transmembrane segment at 74-96 (YILLNLAVADLFMVIGGFTTTMY) threads the bilayer. Over 97–110 (SSMHGYFVLGRLGC) the chain is Extracellular. Cysteine 110 and cysteine 187 are oxidised to a cystine. The chain crosses the membrane as a helical span at residues 111–133 (NLEGFSATLGGMISLWSLAVLAI). Positions 134–136 (ERW) match the 'Ionic lock' involved in activated form stabilization motif. Residues 134–152 (ERWVVVCKPTSNFRFGENH) are Cytoplasmic-facing. Residues 153 to 173 (AIMGVSLTWTMALACTVPPLV) form a helical membrane-spanning segment. The Extracellular portion of the chain corresponds to 174-202 (GWSRYIPEGMQCSCGIDYYTRAEGFNNES). N-linked (GlcNAc...) asparagine glycosylation occurs at asparagine 200. Residues 203-224 (FVLYMFFCHFMVPLIIIFFCYG) form a helical membrane-spanning segment. Residues 225 to 252 (RLLCAVKEAAAAQQESETTQRAEREVTR) are Cytoplasmic-facing. The chain crosses the membrane as a helical span at residues 253–274 (MVILMVIGYLVCWLPYASVAWF). Topologically, residues 275–286 (IFTHQGSEFGPL) are extracellular. The helical transmembrane segment at 287-308 (FMTIPAFFAKSSSIYNPVIYIC) threads the bilayer. Residue lysine 296 is modified to N6-(retinylidene)lysine. Over 309 to 351 (MNKQFRNCMITTLFCGKNPFEGEEEGASSTKTEASSASSVSPA) the chain is Cytoplasmic. Cysteine 323 carries the S-palmitoyl cysteine lipid modification. The disordered stretch occupies residues 330–351 (GEEEGASSTKTEASSASSVSPA). The span at 335–351 (ASSTKTEASSASSVSPA) shows a compositional bias: low complexity.

It belongs to the G-protein coupled receptor 1 family. Opsin subfamily. In terms of processing, phosphorylated on some or all of the serine and threonine residues present in the C-terminal region. Contains one covalently linked retinal chromophore.

It localises to the membrane. It is found in the cell projection. Its subcellular location is the cilium. The protein localises to the photoreceptor outer segment. Functionally, photoreceptor required for image-forming vision at low light intensity. While most salt water fish species use retinal as chromophore, most freshwater fish use 3-dehydroretinal, or a mixture of retinal and 3-dehydroretinal. Light-induced isomerization of 11-cis to all-trans retinal triggers a conformational change that activates signaling via G-proteins. Subsequent receptor phosphorylation mediates displacement of the bound G-protein alpha subunit by arrestin and terminates signaling. The chain is Rhodopsin (rho) from Neoniphon sammara (Spotfin squirrelfish).